The chain runs to 325 residues: Chain length determinant protein (325 aa).

At 1 to 31 (MRVENNNVSGQNLDPEQIDLIDLLVQLWRGK) the chain is on the cytoplasmic side. A helical membrane pass occupies residues 32–52 (MTIIISVIVAIVLAIGYLVVA). The Periplasmic segment spans residues 53–294 (KEKWTSTAIV…LPIRRDSPKK (242 aa)). The helical transmembrane segment at 295–315 (AITLILAVLLGGMVGAGIVLG) threads the bilayer. The Cytoplasmic portion of the chain corresponds to 316–325 (RNALRNYNAK).

This sequence belongs to the WzzB/Cld/Rol family.

It localises to the cell inner membrane. The protein operates within bacterial outer membrane biogenesis; lipopolysaccharide biosynthesis. Its function is as follows. Confers a modal distribution of chain length on the O-antigen component of lipopolysaccharide (LPS). Gives rise to a reduced number of short chain molecules and increases in numbers of longer molecules, with a modal value of 13 (in strain O111/M92) and of 17 (in strain K12). The chain is Chain length determinant protein (wzzB) from Escherichia coli.